The primary structure comprises 933 residues: Protein inturned (933 aa).

Positions 1–54 are disordered; sequence MASLPLCGSVRSPEGLPGDPSSQEDRQDYDPEDPVSGSGSYSPTSTDSNDLEPE. Polar residues predominate over residues 37-48; sequence GSGSYSPTSTDS. A PDZ domain is found at 186-264; the sequence is LVGIIHQTKW…PMQVKLTFEN (79 aa). Serine 675 bears the Phosphoserine mark. The disordered stretch occupies residues 703-742; that stretch reads LKTRKPSPSRSGGPDSGLEGEGVGLSPHTTESQGSHGSEE. Over residues 710–719 the composition is skewed to low complexity; sequence PSRSGGPDSG. A compositionally biased stretch (polar residues) spans 729–738; that stretch reads PHTTESQGSH.

It belongs to the inturned family. Component of the CPLANE (ciliogenesis and planar polarity effectors) complex, composed of INTU, FUZ and WDPCP. Interacts with CPLANE1. Interacts with NPHP4 and DAAM1; INTU is mediating the interaction between NPHP4 and DAAM1.

It is found in the cytoplasm. The protein localises to the cell surface. Its subcellular location is the cytoskeleton. It localises to the cilium basal body. The protein resides in the microtubule organizing center. It is found in the centrosome. The protein localises to the centriole. Its function is as follows. Plays a key role in ciliogenesis and embryonic development. Regulator of cilia formation by controlling the organization of the apical actin cytoskeleton and the positioning of the basal bodies at the apical cell surface, which in turn is essential for the normal orientation of elongating ciliary microtubules. Plays a key role in definition of cell polarity via its role in ciliogenesis but not via conversion extension. Has an indirect effect on hedgehog signaling. Proposed to function as core component of the CPLANE (ciliogenesis and planar polarity effectors) complex involved in the recruitment of peripheral IFT-A proteins to basal bodies. Required for recruitment of CPLANE2 to the mother centriole. Binds phosphatidylinositol 3-phosphate with highest affinity, followed by phosphatidylinositol 4-phosphate and phosphatidylinositol 5-phosphate. The sequence is that of Protein inturned (INTU) from Bos taurus (Bovine).